Consider the following 231-residue polypeptide: DNA damage response protein C (231 aa).

In terms of assembly, homodimer.

The protein localises to the cytoplasm. It is found in the nucleoid. Functionally, appears to contribute to D.radiodurans capacity to survive exposure to ionizing radiation. Likely functions as a DNA damage-induced nucleoid-associated protein (NAP) that contributes to the enhanced level of nucleoid compaction after irradiation by bridging DNA duplexes, thereby limiting the dispersion of the fragmented genome immediately after irradiation to facilitate subsequent DNA repair. In vitro, binds both ssDNA and dsDNA, and is able to compact circular DNA, circularize linear DNA, anneal complementary DNA strands and protect DNA from nucleases. The sequence is that of DNA damage response protein C from Deinococcus radiodurans (strain ATCC 13939 / DSM 20539 / JCM 16871 / CCUG 27074 / LMG 4051 / NBRC 15346 / NCIMB 9279 / VKM B-1422 / R1).